The sequence spans 62 residues: Toxin Tb2-II (62 aa).

An LCN-type CS-alpha/beta domain is found at 1-62 (KEGYAMDHEG…KVWDYATNKC (62 aa)). 4 disulfides stabilise this stretch: Cys-11-Cys-62, Cys-15-Cys-38, Cys-23-Cys-43, and Cys-27-Cys-45.

The protein belongs to the long (4 C-C) scorpion toxin superfamily. Sodium channel inhibitor family. Beta subfamily. In terms of tissue distribution, expressed by the venom gland.

The protein resides in the secreted. Its function is as follows. Beta toxins bind voltage-independently at site-4 of sodium channels (Nav) and shift the voltage of activation toward more negative potentials thereby affecting sodium channel activation and promoting spontaneous and repetitive firing. This toxin is active against both mammals and insects. The chain is Toxin Tb2-II from Tityus bahiensis (Brazilian scorpion).